We begin with the raw amino-acid sequence, 786 residues long: LPS-assembly protein LptD (786 aa).

The N-terminal stretch at 1–39 (MPPKPLFPNVFPGDGAPRKRRLALALLAVPGLVPAVSYA) is a signal peptide. Residues 767-786 (PGYTPLPPPPPPMSRFSNYE) form a disordered region. The span at 770–779 (TPLPPPPPPM) shows a compositional bias: pro residues.

The protein belongs to the LptD family. As to quaternary structure, component of the lipopolysaccharide transport and assembly complex. Interacts with LptE and LptA.

The protein localises to the cell outer membrane. Its function is as follows. Together with LptE, is involved in the assembly of lipopolysaccharide (LPS) at the surface of the outer membrane. The protein is LPS-assembly protein LptD of Burkholderia lata (strain ATCC 17760 / DSM 23089 / LMG 22485 / NCIMB 9086 / R18194 / 383).